The sequence spans 442 residues: UPF0489 protein C5orf22 (442 aa).

The tract at residues 175–210 (SSAKKPKLALEDSENTASTNCDSSSEGLEKDTATQR) is disordered. Residues 189 to 200 (NTASTNCDSSSE) are compositionally biased toward polar residues.

It belongs to the UPF0489 family.

The polypeptide is UPF0489 protein C5orf22 (C5orf22) (Homo sapiens (Human)).